The sequence spans 434 residues: E3 ubiquitin-protein transferase MAEA (434 aa).

Residues 1-124 (MAVQESAAQL…AAASVWKRKR (124 aa)) form an extracellular and involved in cell to cell contact region. Thr-28 is modified (phosphothreonine). Positions 121 to 153 (KRKRMDRMMVEHLLRCGYYNTAVKLARQSGIED) constitute a LisH domain. The 96-residue stretch at 159 to 254 (MFLTAKEVEE…ELIRQNKRLD (96 aa)) folds into the CTLH domain. The tract at residues 190–222 (RKMKGRQSEHDAKTGRKSRVASGSPKESEDLGM) is disordered. Residues 352–419 (CPVCSRSLNK…QDDKVVCPRT (68 aa)) form an RING-Gid-type zinc finger.

As to quaternary structure, identified in the CTLH complex that contains GID4, RANBP9 and/or RANBP10, MKLN1, MAEA, RMND5A (or alternatively its paralog RMND5B), GID8, ARMC8, WDR26 and YPEL5. Within this complex, MAEA, RMND5A (or alternatively its paralog RMND5B), GID8, WDR26, and RANBP9 and/or RANBP10 form the catalytic core, while GID4, MKLN1, ARMC8 and YPEL5 have ancillary roles. Interacts with F-actin. In terms of processing, autoubiquitinated as component of the CTLH E3 ubiquitin-protein ligase complex (in vitro).

The protein resides in the cytoplasm. The protein localises to the nucleus. It localises to the nucleoplasm. It is found in the nucleus matrix. Its subcellular location is the cell membrane. The protein resides in the cytoskeleton. It catalyses the reaction S-ubiquitinyl-[E2 ubiquitin-conjugating enzyme]-L-cysteine + [acceptor protein]-L-lysine = [E2 ubiquitin-conjugating enzyme]-L-cysteine + N(6)-ubiquitinyl-[acceptor protein]-L-lysine.. Functionally, core component of the CTLH E3 ubiquitin-protein ligase complex that selectively accepts ubiquitin from UBE2H and mediates ubiquitination and subsequent proteasomal degradation of the transcription factor HBP1. MAEA and RMND5A are both required for catalytic activity of the CTLH E3 ubiquitin-protein ligase complex. MAEA is required for normal cell proliferation. The CTLH E3 ubiquitin-protein ligase complex is not required for the degradation of enzymes involved in gluconeogenesis, such as FBP1. Plays a role in erythroblast enucleation during erythrocyte maturation and in the development of mature macrophages. Mediates the attachment of erythroid cell to mature macrophages; this MAEA-mediated contact inhibits erythroid cell apoptosis. Participates in erythroblastic island formation, which is the functional unit of definitive erythropoiesis. Associates with F-actin to regulate actin distribution in erythroblasts and macrophages. May contribute to nuclear architecture and cells division events. The polypeptide is E3 ubiquitin-protein transferase MAEA (MAEA) (Bos taurus (Bovine)).